Here is a 365-residue protein sequence, read N- to C-terminus: Paraneoplastic antigen Ma2 homolog (365 aa).

Residue A2 is modified to N-acetylalanine. A disordered region spans residues 336–365 (EEEDAYFEQESREEPGEREGSGCWNNSRNN). Over residues 344–355 (QESREEPGEREG) the composition is skewed to basic and acidic residues.

The protein belongs to the PNMA family. Expressed in the cerebrum, cerebellum and testis.

It localises to the nucleus. It is found in the nucleolus. The chain is Paraneoplastic antigen Ma2 homolog (Pnma2) from Mus musculus (Mouse).